The chain runs to 297 residues: Protoheme IX farnesyltransferase (297 aa).

8 consecutive transmembrane segments (helical) span residues 15–35 (VVAL…PAPY), 39–59 (GLLV…AAVF), 91–111 (VWGV…VNII), 112–132 (TVVL…LYLK), 139–159 (IVIG…AVSG), 166–186 (ACLL…ALAI), 220–240 (LLLV…YLVI), and 265–285 (AWST…ALLF).

This sequence belongs to the UbiA prenyltransferase family. Protoheme IX farnesyltransferase subfamily.

It is found in the cell inner membrane. The enzyme catalyses heme b + (2E,6E)-farnesyl diphosphate + H2O = Fe(II)-heme o + diphosphate. It participates in porphyrin-containing compound metabolism; heme O biosynthesis; heme O from protoheme: step 1/1. Its function is as follows. Converts heme B (protoheme IX) to heme O by substitution of the vinyl group on carbon 2 of heme B porphyrin ring with a hydroxyethyl farnesyl side group. This chain is Protoheme IX farnesyltransferase, found in Vesicomyosocius okutanii subsp. Calyptogena okutanii (strain HA).